The chain runs to 689 residues: uncharacterized protein (689 aa).

A substrate-binding site is contributed by serine 566. Tyrosine 579 acts as the Proton acceptor in catalysis.

It belongs to the short-chain dehydrogenases/reductases (SDR) family.

This is an uncharacterized protein from Bacillus subtilis (strain 168).